Reading from the N-terminus, the 235-residue chain is Phosphoribosylaminoimidazole-succinocarboxamide synthase (235 aa).

Belongs to the SAICAR synthetase family.

The catalysed reaction is 5-amino-1-(5-phospho-D-ribosyl)imidazole-4-carboxylate + L-aspartate + ATP = (2S)-2-[5-amino-1-(5-phospho-beta-D-ribosyl)imidazole-4-carboxamido]succinate + ADP + phosphate + 2 H(+). It functions in the pathway purine metabolism; IMP biosynthesis via de novo pathway; 5-amino-1-(5-phospho-D-ribosyl)imidazole-4-carboxamide from 5-amino-1-(5-phospho-D-ribosyl)imidazole-4-carboxylate: step 1/2. This Streptococcus pneumoniae (strain ATCC 700669 / Spain 23F-1) protein is Phosphoribosylaminoimidazole-succinocarboxamide synthase.